Consider the following 555-residue polypeptide: Glutamine--tRNA ligase (555 aa).

Positions 34-44 match the 'HIGH' region motif; sequence PEPNGYLHIGH. ATP contacts are provided by residues 35–37 and 41–47; these read EPN and HIGHAKS. Positions 67 and 212 each coordinate L-glutamine. Residues Thr231, 261–262, and 269–271 contribute to the ATP site; these read RL and MSK. Residues 268–272 carry the 'KMSKS' region motif; sequence VMSKR. The interval 317–324 is interaction with tRNA; that stretch reads TKQDNTIE.

It belongs to the class-I aminoacyl-tRNA synthetase family. Monomer.

Its subcellular location is the cytoplasm. It carries out the reaction tRNA(Gln) + L-glutamine + ATP = L-glutaminyl-tRNA(Gln) + AMP + diphosphate. This is Glutamine--tRNA ligase from Citrobacter koseri (strain ATCC BAA-895 / CDC 4225-83 / SGSC4696).